Here is a 622-residue protein sequence, read N- to C-terminus: Low affinity potassium transport system protein Kup (622 aa).

Helical transmembrane passes span 9–29 (LPAV…TSPL), 49–69 (VFGF…LKYL), 101–121 (VLVI…VITP), 137–157 (PAMD…LFII), 165–185 (VGKL…VLGV), 212–232 (AVSF…EALY), 247–267 (WFTV…ALLL), 276–296 (PFFL…ATLA), 337–357 (IYIP…IVSF), 363–383 (LAAA…ILFC), 397–417 (AWVL…ANVV), and 419–439 (ILSG…IMTT).

It belongs to the HAK/KUP transporter (TC 2.A.72) family.

The protein resides in the cell inner membrane. The catalysed reaction is K(+)(in) + H(+)(in) = K(+)(out) + H(+)(out). Functionally, responsible for the low-affinity transport of potassium into the cell. Likely operates as a K(+):H(+) symporter. The protein is Low affinity potassium transport system protein Kup of Pectobacterium atrosepticum (strain SCRI 1043 / ATCC BAA-672) (Erwinia carotovora subsp. atroseptica).